A 362-amino-acid chain; its full sequence is MLYALLLPHVAAFHAFNLIRYITFRAGGACLTALVVSFLLGPRLIRWLKSLQKQGQPIRADGPERHLIEKKGTPTMGGFLILIALTVSTLLWADLRNGYVWAVLMITIGYGALGFADDFLKLTKRNTKGVPGRIKLVVQAVLGLGAAVWITQLMPGSIADSLAVPVFKHLMIPFGPLFPLVAMFVMMGASNAVNLTDGLDGLAIVPTIIAAGVFTLIAYLVGNRIFSHYLEINFVPGTGELAVFCSALIGAGMGFLWFNAPPAAVFMGDTGSLALGGALGSVAVATKNEIVLAITGGLFVVETVSVIVQVFWYKRTGRRVFLMAPLHHHFEKKGWAEPTVVIRFWIVAMILALLGLATLKIR.

10 helical membrane-spanning segments follow: residues 21 to 41 (YITFRAGGACLTALVVSFLLG), 75 to 95 (TMGGFLILIALTVSTLLWADL), 100 to 120 (VWAVLMITIGYGALGFADDFL), 136 to 156 (LVVQAVLGLGAAVWITQLMPG), 170 to 190 (LMIPFGPLFPLVAMFVMMGAS), 201 to 221 (GLAIVPTIIAAGVFTLIAYLV), 225 to 245 (IFSHYLEINFVPGTGELAVFC), 247 to 267 (ALIGAGMGFLWFNAPPAAVFM), 290 to 310 (IVLAITGGLFVVETVSVIVQV), and 339 to 359 (TVVIRFWIVAMILALLGLATL).

Belongs to the glycosyltransferase 4 family. MraY subfamily. Mg(2+) serves as cofactor.

The protein resides in the cell inner membrane. It carries out the reaction UDP-N-acetyl-alpha-D-muramoyl-L-alanyl-gamma-D-glutamyl-meso-2,6-diaminopimeloyl-D-alanyl-D-alanine + di-trans,octa-cis-undecaprenyl phosphate = di-trans,octa-cis-undecaprenyl diphospho-N-acetyl-alpha-D-muramoyl-L-alanyl-D-glutamyl-meso-2,6-diaminopimeloyl-D-alanyl-D-alanine + UMP. It participates in cell wall biogenesis; peptidoglycan biosynthesis. Its function is as follows. Catalyzes the initial step of the lipid cycle reactions in the biosynthesis of the cell wall peptidoglycan: transfers peptidoglycan precursor phospho-MurNAc-pentapeptide from UDP-MurNAc-pentapeptide onto the lipid carrier undecaprenyl phosphate, yielding undecaprenyl-pyrophosphoryl-MurNAc-pentapeptide, known as lipid I. The sequence is that of Phospho-N-acetylmuramoyl-pentapeptide-transferase from Acidiphilium cryptum (strain JF-5).